A 195-amino-acid polypeptide reads, in one-letter code: Xanthine phosphoribosyltransferase (195 aa).

2 residues coordinate xanthine: Leu20 and Asn27. Residue 128 to 132 (ANGQA) coordinates 5-phospho-alpha-D-ribose 1-diphosphate. Lys156 serves as a coordination point for xanthine.

This sequence belongs to the purine/pyrimidine phosphoribosyltransferase family. Xpt subfamily. In terms of assembly, homodimer.

It localises to the cytoplasm. The catalysed reaction is XMP + diphosphate = xanthine + 5-phospho-alpha-D-ribose 1-diphosphate. Its pathway is purine metabolism; XMP biosynthesis via salvage pathway; XMP from xanthine: step 1/1. In terms of biological role, converts the preformed base xanthine, a product of nucleic acid breakdown, to xanthosine 5'-monophosphate (XMP), so it can be reused for RNA or DNA synthesis. The chain is Xanthine phosphoribosyltransferase from Lactiplantibacillus plantarum (strain ATCC BAA-793 / NCIMB 8826 / WCFS1) (Lactobacillus plantarum).